The primary structure comprises 256 residues: Probable enoyl-CoA hydratase echA14 (256 aa).

The segment at 235–256 (GPQAKSVQSPEFAARLAAAQHR) is disordered.

The protein belongs to the enoyl-CoA hydratase/isomerase family.

It catalyses the reaction a (3S)-3-hydroxyacyl-CoA = a (2E)-enoyl-CoA + H2O. The enzyme catalyses a 4-saturated-(3S)-3-hydroxyacyl-CoA = a (3E)-enoyl-CoA + H2O. Could possibly oxidize fatty acids using specific components. This Mycobacterium tuberculosis (strain CDC 1551 / Oshkosh) protein is Probable enoyl-CoA hydratase echA14 (echA14).